Reading from the N-terminus, the 70-residue chain is Consomatin Mrc3 (70 aa).

A signal peptide spans 1–22 (MQTAYWVMVMMMVWITAPLSEG). The propeptide occupies 23–55 (GKLNDVIRGLVPDDVTPKRILQSLISRRRFDGR). A disulfide bridge connects residues Cys-62 and Cys-67. The residue at position 64 (Trp-64) is a D-tryptophan. 4-hydroxyproline is present on Pro-68. Tyr-69 bears the Tyrosine amide mark.

It belongs to the conotoxin C superfamily. Consomatin family. As to expression, expressed by the venom duct.

It localises to the secreted. In terms of biological role, moderately activates human somatostatin receptors (SSTR) with a preferential activation of SSTR1 and SSTR4. In vivo, does not cause behavioral changes in mice within a few minutes of intracranial injection, but causes a progressive loss of movement thereafter. Four to five hours after injection, mice recover, even with the highest dose tested. Shows antinociception and antihyperalgesia activities in two mouse models of acute pain, most probably by acting outside the central nervous system. This Conus mercator (Trader cone) protein is Consomatin Mrc3.